A 150-amino-acid polypeptide reads, in one-letter code: UPF0756 membrane protein Dd703_1075 (150 aa).

Helical transmembrane passes span 8-28 (LLILLVLAVLGIVSHNMTITL), 51-71 (YGLSFGILVLTIGVLAPIASG), 81-101 (AFLNWKSLLAVIIGIAVSWLG), and 114-134 (VVAGLLVGTVIGVALLRGVPV).

The protein belongs to the UPF0756 family.

It localises to the cell membrane. This Musicola paradisiaca (strain Ech703) (Dickeya paradisiaca) protein is UPF0756 membrane protein Dd703_1075.